Here is a 177-residue protein sequence, read N- to C-terminus: Large ribosomal subunit protein uL6 (177 aa).

It belongs to the universal ribosomal protein uL6 family. As to quaternary structure, part of the 50S ribosomal subunit.

Functionally, this protein binds to the 23S rRNA, and is important in its secondary structure. It is located near the subunit interface in the base of the L7/L12 stalk, and near the tRNA binding site of the peptidyltransferase center. This is Large ribosomal subunit protein uL6 from Bradyrhizobium sp. (strain ORS 278).